Here is a 101-residue protein sequence, read N- to C-terminus: Movement protein (101 aa).

The disordered stretch occupies residues 1–22 (MDPQNSFLLQPRVPTAAPTSGG). A helical transmembrane segment spans residues 30–50 (EVAILSFVGLICFYLLYLWVL). A disordered region spans residues 79-101 (NPIPNTQAPPSQGNPGPFVPGTG). A compositionally biased stretch (polar residues) spans 80 to 92 (PIPNTQAPPSQGN).

This sequence belongs to the mastrevirus movement protein family. As to quaternary structure, interacts with the capsid protein (CP). Part of a MP-CP-viral DNA complex.

Its subcellular location is the host membrane. Its function is as follows. Involved in the viral transport within, and between cells. The chain is Movement protein from Avena sativa (Oat).